The sequence spans 367 residues: Histidinol-phosphate aminotransferase (367 aa).

Lysine 227 bears the N6-(pyridoxal phosphate)lysine mark.

The protein belongs to the class-II pyridoxal-phosphate-dependent aminotransferase family. Histidinol-phosphate aminotransferase subfamily. In terms of assembly, homodimer. Requires pyridoxal 5'-phosphate as cofactor.

The enzyme catalyses L-histidinol phosphate + 2-oxoglutarate = 3-(imidazol-4-yl)-2-oxopropyl phosphate + L-glutamate. It participates in amino-acid biosynthesis; L-histidine biosynthesis; L-histidine from 5-phospho-alpha-D-ribose 1-diphosphate: step 7/9. In Leptospira borgpetersenii serovar Hardjo-bovis (strain JB197), this protein is Histidinol-phosphate aminotransferase.